The following is a 399-amino-acid chain: MAKNRHLFTSESVSDGHPDKIADQISDAILDAIISKDPDARVACETTVTTGLVLVAGEITTSVYVDIPKIVRDTIKEIGYTRAKYGFDAETCAVLTAIDEQSPDIAQGVDEALESRSGSEIDAAIEAIGAGDQGLMFGFATDETEELMPLPIFLAHGLARKLTELRKTKKLDYLRPDAKTQVTVEYDELNQPVRIDTIVVSTQHHPDITQEEIAKDLHTYLFPEVIDPSFLDEDTKYFINPTGRFVIGGPLGDAGLTGRKIIVDTYGGYARHGGGAFSGKDPTKVDRSGAYAARYVAKNIVAAGLAKKVEVQLAYAIGVARPVSISIDTYGTSDYSEQELIDGVNALFDLRPAGIIHMLDLRRPIYRQTAAFGHFGRSDLDLPWERTDKAEALKKLIVK.

H17 is a binding site for ATP. D19 is a binding site for Mg(2+). E45 serves as a coordination point for K(+). Residues E58 and Q101 each coordinate L-methionine. The flexible loop stretch occupies residues 101–111; that stretch reads QSPDIAQGVDE. Residues 177–179, 244–245, D253, 259–260, A276, and K280 each bind ATP; these read DAK, RF, and RK. Position 253 (D253) interacts with L-methionine. K284 serves as a coordination point for L-methionine.

This sequence belongs to the AdoMet synthase family. In terms of assembly, homotetramer; dimer of dimers. The cofactor is Mg(2+). K(+) is required as a cofactor.

Its subcellular location is the cytoplasm. The catalysed reaction is L-methionine + ATP + H2O = S-adenosyl-L-methionine + phosphate + diphosphate. It participates in amino-acid biosynthesis; S-adenosyl-L-methionine biosynthesis; S-adenosyl-L-methionine from L-methionine: step 1/1. Its function is as follows. Catalyzes the formation of S-adenosylmethionine (AdoMet) from methionine and ATP. The overall synthetic reaction is composed of two sequential steps, AdoMet formation and the subsequent tripolyphosphate hydrolysis which occurs prior to release of AdoMet from the enzyme. The polypeptide is S-adenosylmethionine synthase (Listeria welshimeri serovar 6b (strain ATCC 35897 / DSM 20650 / CCUG 15529 / CIP 8149 / NCTC 11857 / SLCC 5334 / V8)).